Here is a 156-residue protein sequence, read N- to C-terminus: 6,7-dimethyl-8-ribityllumazine synthase (156 aa).

Residues Phe-24, 58 to 60 (AFE), and 82 to 84 (VII) each bind 5-amino-6-(D-ribitylamino)uracil. 87–88 (ST) is a binding site for (2S)-2-hydroxy-3-oxobutyl phosphate. His-90 (proton donor) is an active-site residue. A 5-amino-6-(D-ribitylamino)uracil-binding site is contributed by Phe-115. Arg-129 serves as a coordination point for (2S)-2-hydroxy-3-oxobutyl phosphate.

Belongs to the DMRL synthase family.

It catalyses the reaction (2S)-2-hydroxy-3-oxobutyl phosphate + 5-amino-6-(D-ribitylamino)uracil = 6,7-dimethyl-8-(1-D-ribityl)lumazine + phosphate + 2 H2O + H(+). It participates in cofactor biosynthesis; riboflavin biosynthesis; riboflavin from 2-hydroxy-3-oxobutyl phosphate and 5-amino-6-(D-ribitylamino)uracil: step 1/2. Catalyzes the formation of 6,7-dimethyl-8-ribityllumazine by condensation of 5-amino-6-(D-ribitylamino)uracil with 3,4-dihydroxy-2-butanone 4-phosphate. This is the penultimate step in the biosynthesis of riboflavin. In Chlorobaculum parvum (strain DSM 263 / NCIMB 8327) (Chlorobium vibrioforme subsp. thiosulfatophilum), this protein is 6,7-dimethyl-8-ribityllumazine synthase.